The chain runs to 371 residues: Aspartate-semialdehyde dehydrogenase (371 aa).

NADP(+) contacts are provided by residues 9–12 (RGMV), 37–38 (TS), and Gln-73. Arg-102 is a phosphate binding site. The active-site Acyl-thioester intermediate is the Cys-135. Gln-162 is a substrate binding site. Residues 165–166 (SG) and Pro-193 each bind NADP(+). Glu-241 serves as a coordination point for substrate. Lys-244 is a phosphate binding site. Arg-268 is a substrate binding site. His-275 (proton acceptor) is an active-site residue. Residue Gln-351 coordinates NADP(+).

It belongs to the aspartate-semialdehyde dehydrogenase family. Homodimer.

The enzyme catalyses L-aspartate 4-semialdehyde + phosphate + NADP(+) = 4-phospho-L-aspartate + NADPH + H(+). It functions in the pathway amino-acid biosynthesis; L-lysine biosynthesis via DAP pathway; (S)-tetrahydrodipicolinate from L-aspartate: step 2/4. Its pathway is amino-acid biosynthesis; L-methionine biosynthesis via de novo pathway; L-homoserine from L-aspartate: step 2/3. It participates in amino-acid biosynthesis; L-threonine biosynthesis; L-threonine from L-aspartate: step 2/5. Its function is as follows. Catalyzes the NADPH-dependent formation of L-aspartate-semialdehyde (L-ASA) by the reductive dephosphorylation of L-aspartyl-4-phosphate. The chain is Aspartate-semialdehyde dehydrogenase from Neisseria meningitidis serogroup A / serotype 4A (strain DSM 15465 / Z2491).